The primary structure comprises 126 residues: Large ribosomal subunit protein bL12 (126 aa).

The protein belongs to the bacterial ribosomal protein bL12 family. Homodimer. Part of the ribosomal stalk of the 50S ribosomal subunit. Forms a multimeric L10(L12)X complex, where L10 forms an elongated spine to which 2 to 4 L12 dimers bind in a sequential fashion. Binds GTP-bound translation factors.

Forms part of the ribosomal stalk which helps the ribosome interact with GTP-bound translation factors. Is thus essential for accurate translation. The polypeptide is Large ribosomal subunit protein bL12 (Moorella thermoacetica (strain ATCC 39073 / JCM 9320)).